The sequence spans 271 residues: Shikimate dehydrogenase (NADP(+)) (271 aa).

Residues 14-16 and threonine 61 contribute to the shikimate site; that span reads SLS. Lysine 65 acts as the Proton acceptor in catalysis. Asparagine 86 and aspartate 101 together coordinate shikimate. Residues 125-129 and isoleucine 212 each bind NADP(+); that span reads GAGGA. Tyrosine 214 contacts shikimate. Glycine 235 contacts NADP(+).

The protein belongs to the shikimate dehydrogenase family. Homodimer.

It catalyses the reaction shikimate + NADP(+) = 3-dehydroshikimate + NADPH + H(+). It participates in metabolic intermediate biosynthesis; chorismate biosynthesis; chorismate from D-erythrose 4-phosphate and phosphoenolpyruvate: step 4/7. Functionally, involved in the biosynthesis of the chorismate, which leads to the biosynthesis of aromatic amino acids. Catalyzes the reversible NADPH linked reduction of 3-dehydroshikimate (DHSA) to yield shikimate (SA). This Clostridium perfringens (strain SM101 / Type A) protein is Shikimate dehydrogenase (NADP(+)).